The chain runs to 490 residues: MSTAKWETVIGLEVHVELSTETKIWCGCKNEFGAEPNTNVCPVCLALPGALPVLNYKAVEYTIRAGLALNCKIQRHSKFDRKNYFYADLPSGYQISQFDLPLCYDGYVDITKKDGTTRRIRIKRIHLETDAGKLLHAGDDVAAADYSLVDFNRAGVPLIEIVTEPDLRSAEEAGLFLQKLRTILKYSGVSDVKMEEGSMRCDVNLSVRPAGSSEYGVRTELKNVNSFSAVMRGIEYEEKRHIRILEEGGQPEQETRSWRDAQGISVLLRSKEDAEDYRYFPEPDLPPLEVSAEEIERIRAGLPELPDALMQRLMTEYGLSAYDASVIVAEREYAQWFLHAVELAGAGQAKTVANWQINELYRVMNEKGLGPEQIPVTPEQLVGMLKLIEQGTITGKIAKTVFDKMVETGKDAETIVKEEGLTQVADEGELLAIAREVVASNPKVFEDWKAGKQSAAQWFVGQIMKRTRGRANPQMALKLVTQALEEQAQK.

It belongs to the GatB/GatE family. GatB subfamily. Heterotrimer of A, B and C subunits.

The catalysed reaction is L-glutamyl-tRNA(Gln) + L-glutamine + ATP + H2O = L-glutaminyl-tRNA(Gln) + L-glutamate + ADP + phosphate + H(+). The enzyme catalyses L-aspartyl-tRNA(Asn) + L-glutamine + ATP + H2O = L-asparaginyl-tRNA(Asn) + L-glutamate + ADP + phosphate + 2 H(+). Allows the formation of correctly charged Asn-tRNA(Asn) or Gln-tRNA(Gln) through the transamidation of misacylated Asp-tRNA(Asn) or Glu-tRNA(Gln) in organisms which lack either or both of asparaginyl-tRNA or glutaminyl-tRNA synthetases. The reaction takes place in the presence of glutamine and ATP through an activated phospho-Asp-tRNA(Asn) or phospho-Glu-tRNA(Gln). The protein is Aspartyl/glutamyl-tRNA(Asn/Gln) amidotransferase subunit B of Symbiobacterium thermophilum (strain DSM 24528 / JCM 14929 / IAM 14863 / T).